Consider the following 198-residue polypeptide: uncharacterized protein (198 aa).

The tract at residues Met1–Thr23 is disordered. Residues Ser9–Thr23 are compositionally biased toward polar residues. Mo-molybdopterin-binding residues include Cys75, His144, and Arg149.

It depends on Mo-molybdopterin as a cofactor.

This is an uncharacterized protein from Bacillus subtilis (strain 168).